We begin with the raw amino-acid sequence, 716 residues long: Iron-sulfur clusters transporter atm1, mitochondrial (716 aa).

Residues 1–18 constitute a mitochondrion transit peptide; it reads MAPSIKLSTMATSLHRAH. Residues 19 to 123 lie on the Mitochondrial matrix side of the membrane; that stretch reads GTSALLRRPR…PKGSWGDKAR (105 aa). A disordered region spans residues 57–87; sequence LFAPNGSAKDESKPAVSTVPKTTGRGPSDPL. A helical membrane pass occupies residues 124–145; that stretch reads VLLAIGLLVGGKVLNVQVPFYF. Positions 124-414 constitute an ABC transmembrane type-1 domain; sequence VLLAIGLLVG…LGSVYRELRQ (291 aa). Over 146 to 168 the chain is Mitochondrial intermembrane; sequence REIVDSLNIDFSTTGGSVTAVAG. The chain crosses the membrane as a helical span at residues 169 to 192; sequence AMILGYGAARVGAVVSQELRNAVF. At 193–241 the chain is on the mitochondrial matrix side; that stretch reads ASVAQKAIRKVARNTFEHLLNLDLSFHLSKQTGGLTRAIDRGTKGISFL. The helical transmembrane segment at 242–265 threads the bilayer; sequence LTSMVFHIVPTALEISMVCGILTY. Residue N266 is a topological domain, mitochondrial intermembrane. Residues 267–287 traverse the membrane as a helical segment; sequence FGWQYAALTALTMVSYTAFTI. Residues 288 to 353 are Mitochondrial matrix-facing; sequence LTTAWRTKFR…NSIKVATSLA (66 aa). Residues 293 to 297 and 356 to 359 contribute to the glutathione site; these read RTKFR and NSGQ. A helical membrane pass occupies residues 354-372; that stretch reads FLNSGQNIIFSSALTVMMY. At 373–387 the chain is on the mitochondrial intermembrane side; sequence MGAHGVATGQLTVGD. The helical transmembrane segment at 388 to 409 threads the bilayer; that stretch reads LVLINQLVFQLSVPLNFLGSVY. G406 is a glutathione binding site. The Mitochondrial matrix segment spans residues 410–716; the sequence is RELRQSLLDM…KEEVGEKKEA (307 aa). One can recognise an ABC transporter domain in the interval 449–690; sequence IEFKDVTFGY…NGVYAQLWRA (242 aa). Residues Y458 and 482–493 each bind ATP; that span reads GPSGCGKSTLLR. A disordered region spans residues 697-716; it reads EEGEVSKKGEKEEVGEKKEA. Positions 700-716 are enriched in basic and acidic residues; that stretch reads EVSKKGEKEEVGEKKEA.

It belongs to the ABC transporter superfamily. ABCB family. Heavy Metal importer (TC 3.A.1.210) subfamily. In terms of assembly, homodimer.

It is found in the mitochondrion inner membrane. Performs an essential function in the generation of cytoplasmic iron-sulfur proteins by mediating the ATP-dependent export of Fe/S cluster precursors synthesized by egt-3 and other mitochondrial proteins. Hydrolyzes ATP. Binds glutathione and may function by transporting a glutathione-conjugated iron-sulfur compound. The sequence is that of Iron-sulfur clusters transporter atm1, mitochondrial from Neurospora crassa (strain ATCC 24698 / 74-OR23-1A / CBS 708.71 / DSM 1257 / FGSC 987).